The following is a 191-amino-acid chain: MTVKIGVLALQGAVSEHIKALKDSGAETIAVKDASQLEELDGLVLPGGESTTMRRLMDKYGLFDAIKIFAKKKAIFGTCAGLILMAKEIEGRKGPHLGLLDIDVKRNAFGSQVDSFESDLKIDHVAESFDGVFIRAPYIKKVGPGVEILSTYNQHIVACRQGRFLACAFHPELTGDTRFHEYFVKITKENK.

48 to 50 (GES) is an L-glutamine binding site. C79 acts as the Nucleophile in catalysis. L-glutamine contacts are provided by residues R106 and 134–135 (IR). Active-site charge relay system residues include H170 and E172.

It belongs to the glutaminase PdxT/SNO family. As to quaternary structure, in the presence of PdxS, forms a dodecamer of heterodimers. Only shows activity in the heterodimer.

The enzyme catalyses aldehydo-D-ribose 5-phosphate + D-glyceraldehyde 3-phosphate + L-glutamine = pyridoxal 5'-phosphate + L-glutamate + phosphate + 3 H2O + H(+). It carries out the reaction L-glutamine + H2O = L-glutamate + NH4(+). It participates in cofactor biosynthesis; pyridoxal 5'-phosphate biosynthesis. In terms of biological role, catalyzes the hydrolysis of glutamine to glutamate and ammonia as part of the biosynthesis of pyridoxal 5'-phosphate. The resulting ammonia molecule is channeled to the active site of PdxS. The chain is Pyridoxal 5'-phosphate synthase subunit PdxT from Oenococcus oeni (strain ATCC BAA-331 / PSU-1).